The primary structure comprises 79 residues: UPF0291 protein lp_2062 (79 aa).

The protein belongs to the UPF0291 family.

It is found in the cytoplasm. This Lactiplantibacillus plantarum (strain ATCC BAA-793 / NCIMB 8826 / WCFS1) (Lactobacillus plantarum) protein is UPF0291 protein lp_2062.